The chain runs to 710 residues: PWWP domain-containing DNA repair factor 3A (710 aa).

The segment at 106-160 (QESSAGTGRADRSLRGKPMEHVSSPCDSNSSSLPRGDVLGSSRPHRRRPCVQQSL) is disordered. Over residues 114-125 (RADRSLRGKPME) the composition is skewed to basic and acidic residues. A compositionally biased stretch (low complexity) spans 128 to 137 (SSPCDSNSSS). At S161 the chain carries Phosphoserine. Disordered regions lie at residues 177 to 204 (KKGLRKSENPRGPLVLPAGGGAQDESGS) and 230 to 398 (NGSS…EEPP). The segment covering 288-297 (PSACSEPGEC) has biased composition (low complexity). Residues S374 and S375 each carry the phosphoserine modification. The segment covering 375–385 (SEESMGSNSMR) has biased composition (polar residues). In terms of domain architecture, PWWP spans 411–472 (VGMLVWHKHK…KHFDCKEKQT (62 aa)).

The protein belongs to the PWWP3A family. As to quaternary structure, interacts with TP53BP1 (via BRCT domain); the interaction is not dependent on its phosphorylation status. Binds nucleosomes. Interacts with trimethylated 'Lys-36' of histone H3 (H3K36me3) (in vitro).

Its subcellular location is the nucleus. Its function is as follows. Involved in the DNA damage response pathway by contributing to the maintenance of chromatin architecture. Recruited to the vicinity of DNA breaks by TP53BP1 and plays an accessory role to facilitate damage-induced chromatin changes and promoting chromatin relaxation. Required for efficient DNA repair and cell survival following DNA damage. This chain is PWWP domain-containing DNA repair factor 3A, found in Homo sapiens (Human).